The following is a 75-amino-acid chain: Conotoxin Im23.5 (75 aa).

An N-terminal signal peptide occupies residues 1 to 23; the sequence is MKFFTCLLLLLVVLTVVFDNVDA. Cystine bridges form between C24–C28, C37–C40, and C41–C43. Residues 24–50 constitute a propeptide that is removed on maturation; that stretch reads CDRSCTGVMGHPSCATCCACFTSAGKR.

Expressed by the venom duct.

The protein resides in the secreted. Probable neurotoxin. In Conus imperialis (Imperial cone), this protein is Conotoxin Im23.5.